We begin with the raw amino-acid sequence, 776 residues long: A-type ATP synthase subunit A (776 aa).

This sequence belongs to the ATPase alpha/beta chains family. As to quaternary structure, has multiple subunits with at least A(3), B(3), C, D, E, F, H, I and proteolipid K(x). Post-translationally, this protein undergoes a protein self splicing that involves a post-translational excision of the VDE intervening region (intein) followed by peptide ligation.

The protein resides in the cell membrane. The catalysed reaction is ATP + H2O + 4 H(+)(in) = ADP + phosphate + 5 H(+)(out). In terms of biological role, component of the A-type ATP synthase that produces ATP from ADP in the presence of a proton gradient across the membrane. The A chain is the catalytic subunit. This is A-type ATP synthase subunit A from Thermoplasma volcanium (strain ATCC 51530 / DSM 4299 / JCM 9571 / NBRC 15438 / GSS1).